Reading from the N-terminus, the 83-residue chain is Large ribosomal subunit protein eL31 (83 aa).

The protein belongs to the eukaryotic ribosomal protein eL31 family.

The chain is Large ribosomal subunit protein eL31 from Methanococcus vannielii (strain ATCC 35089 / DSM 1224 / JCM 13029 / OCM 148 / SB).